The following is a 273-amino-acid chain: Glucosamine-6-phosphate deaminase (273 aa).

Asp-72 (proton acceptor; for enolization step) is an active-site residue. The active-site For ring-opening step is Asp-141. The Proton acceptor; for ring-opening step role is filled by His-143. The active-site For ring-opening step is Glu-148.

Belongs to the glucosamine/galactosamine-6-phosphate isomerase family. As to quaternary structure, homohexamer.

It is found in the cytoplasm. It carries out the reaction alpha-D-glucosamine 6-phosphate + H2O = beta-D-fructose 6-phosphate + NH4(+). It functions in the pathway nucleotide-sugar biosynthesis; UDP-N-acetyl-alpha-D-glucosamine biosynthesis; alpha-D-glucosamine 6-phosphate from D-fructose 6-phosphate: step 1/1. Its function is as follows. Catalyzes the reversible conversion of alpha-D-glucosamine 6-phosphate (GlcN-6P) into beta-D-fructose 6-phosphate (Fru-6P) and ammonium ion, a regulatory reaction step in de novo uridine diphosphate-N-acetyl-alpha-D-glucosamine (UDP-GlcNAc) biosynthesis via hexosamine pathway. In Drosophila melanogaster (Fruit fly), this protein is Glucosamine-6-phosphate deaminase.